The sequence spans 151 residues: UPF0178 protein mma_0312 (151 aa).

Belongs to the UPF0178 family.

This chain is UPF0178 protein mma_0312, found in Janthinobacterium sp. (strain Marseille) (Minibacterium massiliensis).